The sequence spans 416 residues: Enterobactin exporter EntS (416 aa).

At 1–21 the chain is on the cytoplasmic side; it reads MNKQSWLLNLSLLKTHPAFRA. The chain crosses the membrane as a helical span at residues 22 to 42; sequence VFLARFISIVSLGLLGVAVPV. Topologically, residues 43–55 are periplasmic; the sequence is QIQMMTHSTWQVG. The chain crosses the membrane as a helical span at residues 56–76; the sequence is LSVTLTGGAMFVGLMVGGVLA. Topologically, residues 77–83 are cytoplasmic; it reads DRYERKK. The helical transmembrane segment at 84-104 threads the bilayer; it reads VILLARGTCGIGFIGLCLNAL. The Periplasmic portion of the chain corresponds to 105-109; sequence LPEPS. The chain crosses the membrane as a helical span at residues 110–130; that stretch reads LLAIYLLGLWDGFFASLGVTA. At 131-156 the chain is on the cytoplasmic side; sequence LLAATPALVGRENLMQAGAITMLTVR. The helical transmembrane segment at 157–177 threads the bilayer; the sequence is LGSVISPMIGGLLLATGGVAW. A topological domain (periplasmic) is located at residue asparagine 178. A helical transmembrane segment spans residues 179–199; it reads YGLAAAGTFITLLPLLSLPAL. Topologically, residues 200–218 are cytoplasmic; the sequence is PPPPQPREHPLKSLLAGFR. Residues 219–239 form a helical membrane-spanning segment; sequence FLLASPLVGGIALLGGLLTMA. The Periplasmic segment spans residues 240-256; it reads SAVRVLYPALADNWQMS. The helical transmembrane segment at 257–277 threads the bilayer; sequence AAQIGFLYAAIPLGAAIGALT. Residues 278-287 lie on the Cytoplasmic side of the membrane; it reads SGKLAHSARP. A helical membrane pass occupies residues 288-307; that stretch reads GLLMLLSTLGSFLAIGLFGL. The Periplasmic portion of the chain corresponds to 308 to 313; sequence MPMWIL. Residues 314-336 traverse the membrane as a helical segment; sequence GVICLALFGWLSAVSSLLQYTML. The Cytoplasmic portion of the chain corresponds to 337–356; the sequence is QTQTPEAMLGRINGLWTAQN. A helical membrane pass occupies residues 357–377; sequence VTGDAIGAALLGGLGAMMTPV. Residue alanine 378 is a topological domain, periplasmic. The helical transmembrane segment at 379–399 threads the bilayer; sequence SASASGFGLLIIGVLLLLVLV. The Cytoplasmic segment spans residues 400-416; it reads ELRRFRQTPPQVTASDS.

The protein belongs to the major facilitator superfamily. EntS (TC 2.A.1.38) family.

It localises to the cell inner membrane. In terms of biological role, component of an export pathway for enterobactin. This Escherichia coli O81 (strain ED1a) protein is Enterobactin exporter EntS.